We begin with the raw amino-acid sequence, 259 residues long: Polycomb group RING finger protein 1 (259 aa).

Ala-2 is modified (N-acetylalanine). Ser-3 bears the Phosphoserine mark. A Glycyl lysine isopeptide (Lys-Gly) (interchain with G-Cter in SUMO2) cross-link involves residue Lys-24. Residues Cys-47 to Asn-86 form an RING-type zinc finger. Residues Asn-86 to Pro-247 form a necessary for repressor activity region. Lys-88 is covalently cross-linked (Glycyl lysine isopeptide (Lys-Gly) (interchain with G-Cter in SUMO2)). Positions Leu-150–Lys-255 are required for the interaction with the KDM2B-SKP1 heterodimeric complex. The tract at residues Glu-167–Lys-255 is RING-finger and WD40-associated ubiquitin-like domain (RAWUL); sufficient for interaction with BCOR and BCORL1.

In terms of assembly, interacts with BCORL1, forming heterodimers. The PCGF1-BCORL1 heterodimeric complex interacts with the KDM2B-SKP1 heterodimeric complex to form a homotetrameric polycomb repression complex 1 (PRC1.1). Component of the repressive BCOR complex containing a Polycomb group subcomplex at least composed of RYBP, RING1 and RNF2/RING2. Specifically interacts with BCOR, RING1 and RNF2/RING2. Component of a PRC1-like complex. Interacts with CBX6, CBX7 and CBX8. Interacts with DPPA4, NANOG, POU5F1 and RYBP.

Its subcellular location is the nucleus. Functionally, component of the Polycomb group (PcG) multiprotein BCOR complex, a complex required to maintain the transcriptionally repressive state of some genes, such as BCL6 and the cyclin-dependent kinase inhibitor, CDKN1A. Transcriptional repressor that may be targeted to the DNA by BCL6; this transcription repressor activity may be related to PKC signaling pathway. Represses CDKN1A expression by binding to its promoter, and this repression is dependent on the retinoic acid response element (RARE element). Promotes cell cycle progression and enhances cell proliferation as well. May have a positive role in tumor cell growth by down-regulating CDKN1A. Component of a Polycomb group (PcG) multiprotein PRC1-like complex, a complex class required to maintain the transcriptionally repressive state of many genes, including Hox genes, throughout development. PcG PRC1 complex acts via chromatin remodeling and modification of histones; it mediates monoubiquitination of histone H2A 'Lys-119', rendering chromatin heritably changed in its expressibility. Within the PRC1-like complex, regulates RNF2 ubiquitin ligase activity. Regulates the expression of DPPA4 and NANOG in the NT2 embryonic carcinoma cells. This chain is Polycomb group RING finger protein 1 (Pcgf1), found in Mus musculus (Mouse).